Consider the following 364-residue polypeptide: C3a anaphylatoxin chemotactic receptor (364 aa).

At 1-50 (MGDNMDFSEHYGNFSENYVTESYGEFDLYYDPLNETSLSEQGHRSIWVLS) the chain is on the extracellular side. N-linked (GlcNAc...) asparagine glycosylation is found at N13 and N34. A helical transmembrane segment spans residues 51 to 71 (IVLCSIACVLGITGNAFVIWI). Topologically, residues 72 to 82 (AGVKMKRTVNT) are cytoplasmic. A helical transmembrane segment spans residues 83–103 (IWFVNLAAADLLCCVSIPFSI). The Extracellular portion of the chain corresponds to 104 to 120 (ADIILNSHWPYGEAMCK). C119 and C198 form a disulfide bridge. Residues 121-141 (ILPSMVVLNMFASVFTLVLIS) form a helical membrane-spanning segment. At 142 to 159 (LDRFALVILPVWAQNHRS) the chain is on the cytoplasmic side. Residues 160-180 (ITLAWLLCGLVWVLGLLLSLP) form a helical membrane-spanning segment. Residues 181-220 (SMIYREIVVHDDMNITLCIYNHLQDKTEGNQSAIKAIHVT) lie on the Extracellular side of the membrane. The helical transmembrane segment at 221–241 (RLILGFLIPLLVIAVCYLLIG) threads the bilayer. The Cytoplasmic segment spans residues 242–256 (RRVSSGRFKSQRAFQ). A helical transmembrane segment spans residues 257–277 (IILVVVTTFFVCWLPYHVIGL). Topologically, residues 278 to 295 (VIEYGKEASQVMARALDP) are extracellular. The helical transmembrane segment at 296 to 316 (LAISLAYVNSCLNPVLYVFMG) threads the bilayer. Residues 317 to 364 (QDFKERVRVSLRKIFEKVFSEDVTLRSSVYSKGQSQLSRATNSSEAQV) lie on the Cytoplasmic side of the membrane.

Belongs to the G-protein coupled receptor 1 family.

It is found in the cell membrane. Its function is as follows. Receptor for the chemotactic and inflammatory peptide anaphylatoxin C3a. This receptor stimulates chemotaxis, granule enzyme release and superoxide anion production. This is C3a anaphylatoxin chemotactic receptor (c3ar1) from Oncorhynchus mykiss (Rainbow trout).